A 401-amino-acid chain; its full sequence is Phosphoglycerate kinase (401 aa).

Residues 20–22 (DFN), Arg-35, 58–61 (HLGR), Arg-117, and Arg-154 each bind substrate. ATP is bound by residues Lys-204, Gly-298, Glu-329, and 358 to 361 (GGDS).

This sequence belongs to the phosphoglycerate kinase family. As to quaternary structure, monomer.

It is found in the cytoplasm. It carries out the reaction (2R)-3-phosphoglycerate + ATP = (2R)-3-phospho-glyceroyl phosphate + ADP. It functions in the pathway carbohydrate degradation; glycolysis; pyruvate from D-glyceraldehyde 3-phosphate: step 2/5. This chain is Phosphoglycerate kinase, found in Bifidobacterium longum (strain NCC 2705).